Here is a 697-residue protein sequence, read N- to C-terminus: Testis-specific gene 10 protein (697 aa).

Positions 556 to 688 (QMTNERISMQ…SPDRGLDRSL (133 aa)) are interaction with HIF1A. The disordered stretch occupies residues 656–684 (NAYNLGPMKPNTKCHSPERAHHRSPDRGL). Residues 670-684 (HSPERAHHRSPDRGL) show a composition bias toward basic and acidic residues. At S687 the chain carries Phosphoserine.

Belongs to the CEP135/TSGA10 family. In terms of assembly, interacts with HIF1A. Post-translationally, processed into N-terminal 27-kDa and C-terminal 55-kDa fragments. In terms of tissue distribution, predominantly expressed in testis, in spermatozoa (at protein level). Not detected in Leydig cells. The N-terminal 27-kDa fragment is also detected in liver, while the C-terminal 55-kDa fragment is also found retina, brain and kidney (at protein level).

The protein resides in the cytoplasm. Its subcellular location is the cytoskeleton. It is found in the microtubule organizing center. It localises to the centrosome. The protein localises to the centriole. Functionally, plays a role in spermatogenesis. When overexpressed, prevents nuclear localization of HIF1A. The chain is Testis-specific gene 10 protein (Tsga10) from Mus musculus (Mouse).